The primary structure comprises 320 residues: GMP reductase (320 aa).

Residue Cys174 is the Thioimidate intermediate of the active site. 203-226 (IIADGGLRVHGDIAKSIRMGASFC) lines the NADP(+) pocket.

Belongs to the IMPDH/GMPR family. GuaC type 2 subfamily.

It catalyses the reaction IMP + NH4(+) + NADP(+) = GMP + NADPH + 2 H(+). Catalyzes the irreversible NADPH-dependent deamination of GMP to IMP. It functions in the conversion of nucleobase, nucleoside and nucleotide derivatives of G to A nucleotides, and in maintaining the intracellular balance of A and G nucleotides. This is GMP reductase from Mycoplasma mycoides subsp. mycoides SC (strain CCUG 32753 / NCTC 10114 / PG1).